The following is a 156-amino-acid chain: Small ribosomal subunit protein uS7c (156 aa).

Belongs to the universal ribosomal protein uS7 family. Part of the 30S ribosomal subunit.

Its subcellular location is the plastid. It localises to the chloroplast. Its function is as follows. One of the primary rRNA binding proteins, it binds directly to 16S rRNA where it nucleates assembly of the head domain of the 30S subunit. The sequence is that of Small ribosomal subunit protein uS7c (rps7) from Cycas revoluta (Sago palm).